The chain runs to 617 residues: Probable LRR receptor-like serine/threonine-protein kinase RKF3 (617 aa).

An N-terminal signal peptide occupies residues Met-1 to Ala-20. Residues Gln-21 to Lys-212 are Extracellular-facing. Residues Asn-22, Asn-124, Asn-135, and Asn-165 are each glycosylated (N-linked (GlcNAc...) asparagine). A helical transmembrane segment spans residues Val-213–Phe-233. The Cytoplasmic segment spans residues Trp-234–Thr-617. Residues Phe-283–Thr-563 enclose the Protein kinase domain. Residues Ile-289–Val-297 and Lys-311 each bind ATP. Residue Asp-412 is the Proton acceptor of the active site. Residues Val-585–Thr-617 are disordered.

The protein belongs to the protein kinase superfamily. Ser/Thr protein kinase family. Expressed in the whole plant at low levels.

The protein localises to the cell membrane. The catalysed reaction is L-seryl-[protein] + ATP = O-phospho-L-seryl-[protein] + ADP + H(+). It carries out the reaction L-threonyl-[protein] + ATP = O-phospho-L-threonyl-[protein] + ADP + H(+). This is Probable LRR receptor-like serine/threonine-protein kinase RKF3 (RKF3) from Arabidopsis thaliana (Mouse-ear cress).